We begin with the raw amino-acid sequence, 810 residues long: RING finger protein unkempt homolog (810 aa).

Positions 1 to 24 (MSKGPGPGGSAASSAPPAATAQVL) are disordered. Residues 10-19 (SAASSAPPAA) show a composition bias toward low complexity. C3H1-type zinc fingers lie at residues 84–113 (YSPD…HRTT), 124–154 (YYKT…HGPH), 215–241 (NYKT…HNSK), 251–285 (KYRS…HTRT), and 293–321 (IYKS…HVEQ). Positions 239 to 265 (NSKDRRRSPRKHKYRSSPCPNVKHGDE) are disordered. Ser240 bears the Phosphoserine mark. Basic residues predominate over residues 241–253 (KDRRRSPRKHKYR). The tract at residues 324–343 (LSDDLQPSSAVSSPTQPGPV) is disordered. The segment covering 328–338 (LQPSSAVSSPT) has biased composition (polar residues). Phosphoserine occurs at positions 374, 378, 385, and 631. The stretch at 643 to 723 (GAAELARLRQ…QEELERLHAG (81 aa)) forms a coiled coil. Residues 766–801 (SVKCLKCQEQKRAVLPCQHAALCELCAEGSECPICQ) form an RING-type; degenerate zinc finger.

This sequence belongs to the unkempt family.

Its subcellular location is the cytoplasm. Functionally, sequence-specific RNA-binding protein which plays an important role in the establishment and maintenance of the early morphology of cortical neurons during embryonic development. Acts as a translation repressor and controls a translationally regulated cell morphology program to ensure proper structuring of the nervous system. Translational control depends on recognition of its binding element within target mRNAs which consists of a mandatory UAG trimer upstream of a U/A-rich motif. Associated with polysomes. The protein is RING finger protein unkempt homolog (UNK) of Homo sapiens (Human).